The sequence spans 228 residues: MPLNAVRVASKAQPAKNVILVFHGLGDSGSGWSFLAEYLQRSPAFAHTRFVFPNAPNMRIDANGGMSMPAWFNIYDWANPDARVDVEGIKSSLKVINSFIQEQIDDGISPENIILGGFSQGAALTLASTVTSPYKLGGFFALSGFCRLKKEDLDSIAENKNKDTPVFHGHGDQDPIIPIQYGSDAKKFFEKYFHLSDYDFKSYRGMAHSTSLEEMQDLVQFLSKALKL.

Catalysis depends on charge relay system residues Ser119, Asp174, and His208.

The protein belongs to the AB hydrolase superfamily. AB hydrolase 2 family.

The protein localises to the cytoplasm. Its subcellular location is the nucleus. It catalyses the reaction S-hexadecanoyl-L-cysteinyl-[protein] + H2O = L-cysteinyl-[protein] + hexadecanoate + H(+). Hydrolyzes fatty acids from S-acylated cysteine residues in proteins with a strong preference for palmitoylated G-alpha proteins over other acyl substrates. Mediates the deacylation of G-alpha proteins such as GPA1 in vivo, but has weak or no activity toward palmitoylated Ras proteins. Has weak lysophospholipase activity in vitro; however such activity may not exist in vivo. The protein is Acyl-protein thioesterase 1 of Kluyveromyces lactis (strain ATCC 8585 / CBS 2359 / DSM 70799 / NBRC 1267 / NRRL Y-1140 / WM37) (Yeast).